The chain runs to 278 residues: MAIFKDIAGLRQWRQSLHGTLALVPTMGNLHEGHLALVRLAANRAEHVLVSIYVNPLQFGPGEDFANYPRTLDQDLQRLHEAGCQTVFTPDDGLMYPRGRQDISIVMPPRSLSKVLCGASRPGHFAGVCTVLSKLLHMVAPEILILGEKDYQQLRIVQQMVADLNLNVQVLPGPLQREADGLAYSSRNIYLNLAERQVAPLLAETLFDLARRSTNDAAVSDLAATGWERLERAGFLPEYLELRDAQTLQSLALPQPGARWFAAARLGQIRLIDNVIIS.

Residue 27–34 participates in ATP binding; sequence MGNLHEGH. Residue His34 is the Proton donor of the active site. Position 58 (Gln58) interacts with (R)-pantoate. Gln58 lines the beta-alanine pocket. 147–150 provides a ligand contact to ATP; the sequence is GEKD. Residue Gln153 coordinates (R)-pantoate. 184 to 187 serves as a coordination point for ATP; it reads YSSR.

Belongs to the pantothenate synthetase family. Homodimer.

The protein localises to the cytoplasm. It catalyses the reaction (R)-pantoate + beta-alanine + ATP = (R)-pantothenate + AMP + diphosphate + H(+). The protein operates within cofactor biosynthesis; (R)-pantothenate biosynthesis; (R)-pantothenate from (R)-pantoate and beta-alanine: step 1/1. Catalyzes the condensation of pantoate with beta-alanine in an ATP-dependent reaction via a pantoyl-adenylate intermediate. The polypeptide is Pantothenate synthetase (Acidithiobacillus ferrooxidans (strain ATCC 23270 / DSM 14882 / CIP 104768 / NCIMB 8455) (Ferrobacillus ferrooxidans (strain ATCC 23270))).